The primary structure comprises 119 residues: Fluoride-specific ion channel FluC (119 aa).

The next 4 membrane-spanning stretches (helical) occupy residues 5–25, 30–50, 59–79, and 92–112; these read IIPLSIGAALGATARWLLNLA, LSPATGNLFANWTGAFLIGIF, WKLLLITGFLGSLTTLSGFSL, and SALANIFLHTAGSLLLTWLGL. Residues glycine 69 and threonine 72 each contribute to the Na(+) site.

The protein belongs to the fluoride channel Fluc/FEX (TC 1.A.43) family.

It is found in the cell inner membrane. It carries out the reaction fluoride(in) = fluoride(out). With respect to regulation, na(+) is not transported, but it plays an essential structural role and its presence is essential for fluoride channel function. Its function is as follows. Fluoride-specific ion channel. Important for reducing fluoride concentration in the cell, thus reducing its toxicity. In Neisseria meningitidis serogroup A / serotype 4A (strain DSM 15465 / Z2491), this protein is Fluoride-specific ion channel FluC.